The following is a 329-amino-acid chain: MCSRILLSGLVGLGAGTGLTYLLLNKHSPTQIIETPYPPTQKPNSNIQSHSFNVDPSGFFKYGFPGPIHDLQNREEFISCYNRQTQNPYWVLEHITPESLAARNADRKNSFFKEDEVIPEKFRGKLRDYFRSGYDRGHQAPAADAKFSQQAMDDTFYLSNMCPQVGEGFNRDYWAHLEYFCRGLTKKYKSVRIVTGPLYLPKKDPIDNKFRVNYEVIGNPPSIAVPTHFFKLIVAEAPTANPAREDIAVAAFVLPNEPISNETKLTDFEVPIDALERSTGLELLQKVPPSKKKALCKEVNCQIVVRDFSNAAIKQSKDVKLLPPPKKRN.

The active-site Proton acceptor is the His138. Position 170 (Asn170) interacts with Mg(2+).

Belongs to the DNA/RNA non-specific endonuclease family. In terms of assembly, homodimer. Mn(2+) serves as cofactor. Requires Mg(2+) as cofactor.

It localises to the mitochondrion inner membrane. Its function is as follows. This enzyme has both RNase and DNase activity. The protein is Mitochondrial nuclease (NUC1) of Saccharomyces cerevisiae (strain ATCC 204508 / S288c) (Baker's yeast).